We begin with the raw amino-acid sequence, 1199 residues long: Tubulin monoglutamylase TTLL4 (1199 aa).

The segment covering 1-25 (MASAGTQHYSIGLRQKNSFKQSGPS) has biased composition (polar residues). 3 disordered regions span residues 1–43 (MASA…RVWP), 472–517 (IQLG…ELVD), and 525–544 (RDEN…SAVS). Basic and acidic residues predominate over residues 477 to 495 (SEKERPEEARELDSSDRDI). Residues 506–517 (AETEDTEEELVD) are compositionally biased toward acidic residues. The TTL domain occupies 604 to 947 (RKLLRWKMST…VLPNAEDIIS (344 aa)). A Phosphoserine modification is found at Ser691. ATP is bound by residues Lys721, 727 to 728 (RG), 749 to 752 (QRYL), and 762 to 764 (KFD). Residue Arg727 participates in a protein binding. Arg788 is an L-glutamate binding site. 809–810 (TN) provides a ligand contact to ATP. L-glutamate contacts are provided by Tyr811, Ser812, and Lys833. Asp893, Glu906, and Asn908 together coordinate Mg(2+). Residues 918–1029 (PLDISIKGQM…RGQFERIFPS (112 aa)) are c-MTBD region. Residue Lys924 coordinates L-glutamate. Residues 1130–1141 (GTTPKSKKTQAG) are compositionally biased toward polar residues. Residues 1130-1199 (GTTPKSKKTQ…ISDSLLAVSP (70 aa)) are disordered. Residues 1151–1160 (SSKDSEDTSK) show a composition bias toward basic and acidic residues. The span at 1164 to 1192 (LSTQTLPVIKCSGQTSRLSASSTFQSISD) shows a compositional bias: polar residues.

Belongs to the tubulin--tyrosine ligase family. The cofactor is Mg(2+).

Its subcellular location is the cytoplasm. The protein resides in the cell projection. The protein localises to the cilium. It is found in the cytoskeleton. It localises to the cilium basal body. The catalysed reaction is L-glutamyl-[protein] + L-glutamate + ATP = gamma-L-glutamyl-L-glutamyl-[protein] + ADP + phosphate + H(+). In terms of biological role, monoglutamylase which modifies both tubulin and non-tubulin proteins, adding a single glutamate on the gamma-carboxyl group of specific glutamate residues of target proteins. Involved in the side-chain initiation step of the polyglutamylation reaction but not in the elongation step. Preferentially modifies beta-tail tubulin over the alpha-tubulin. Monoglutamylates nucleosome assembly proteins NAP1L1 and NAP1L4. Monoglutamylates nucleotidyltransferase CGAS, leading to inhibition of CGAS catalytic activity, thereby preventing antiviral defense function. Involved in KLF4 glutamylation which impedes its ubiquitination, thereby leading to somatic cell reprogramming, pluripotency maintenance and embryogenesis. This Homo sapiens (Human) protein is Tubulin monoglutamylase TTLL4.